Consider the following 802-residue polypeptide: Oligophrenin-1 (802 aa).

Residues 265–368 form the PH domain; the sequence is QPTIEGYLYT…WMEAMDGKEP (104 aa). One can recognise a Rho-GAP domain in the interval 380-564; sequence MELNEVGFKF…ILIEHFGKIY (185 aa). Disordered regions lie at residues 606 to 665 and 681 to 802; these read SLDE…SEPC and GTKA…GDES. Polar residues predominate over residues 617–627; the sequence is QTPNGTITSNL. Residues 716–732 show a composition bias toward basic and acidic residues; the sequence is HHKEGDTDGFSKVRPPG.

In terms of assembly, interacts with HOMER1. Interacts with AMPA receptor complexes. Interacts with SH3GL2 (endophilin-A1). Interacts (via C-terminus) with NR1D1.

It localises to the postsynapse. The protein localises to the presynapse. Its subcellular location is the cell projection. It is found in the axon. The protein resides in the dendritic spine. It localises to the dendrite. The protein localises to the cytoplasm. In terms of biological role, stimulates GTP hydrolysis of members of the Rho family. Its action on RHOA activity and signaling is implicated in growth and stabilization of dendritic spines, and therefore in synaptic function. Critical for the stabilization of AMPA receptors at postsynaptic sites. Critical for the regulation of synaptic vesicle endocytosis at presynaptic terminals. Required for the localization of NR1D1 to dendrites, can suppress its repressor activity and protect it from proteasomal degradation. The chain is Oligophrenin-1 (Ophn1) from Mus musculus (Mouse).